Here is a 222-residue protein sequence, read N- to C-terminus: Methylthioribulose-1-phosphate dehydratase (222 aa).

Zn(2+) contacts are provided by His94 and His96.

Belongs to the aldolase class II family. MtnB subfamily. Zn(2+) serves as cofactor.

The enzyme catalyses 5-(methylsulfanyl)-D-ribulose 1-phosphate = 5-methylsulfanyl-2,3-dioxopentyl phosphate + H2O. The protein operates within amino-acid biosynthesis; L-methionine biosynthesis via salvage pathway; L-methionine from S-methyl-5-thio-alpha-D-ribose 1-phosphate: step 2/6. Functionally, catalyzes the dehydration of methylthioribulose-1-phosphate (MTRu-1-P) into 2,3-diketo-5-methylthiopentyl-1-phosphate (DK-MTP-1-P). In Yersinia pseudotuberculosis serotype IB (strain PB1/+), this protein is Methylthioribulose-1-phosphate dehydratase.